We begin with the raw amino-acid sequence, 548 residues long: Splicing factor U2af large subunit B (548 aa).

Residues 1 to 82 (MADDHAAAAD…DRDRDRDKDR (82 aa)) are compositionally biased toward basic and acidic residues. The segment at 1 to 156 (MADDHAAAAD…SKRVSGFDMA (156 aa)) is disordered. A compositionally biased stretch (basic residues) spans 83–93 (DRHHRHHRERR). The span at 94-120 (EHRDRSDDHDRHRSRDSERRRDHERDG) shows a compositional bias: basic and acidic residues. Residues 121-149 (RRRHRSRSRSRSRGRDRRSRSRSRSKSKR) are compositionally biased toward basic residues. RRM domains lie at 214–297 (RRVY…RPTD), 334–412 (DRIF…RANQ), and 453–539 (QVVS…YPEN).

Belongs to the splicing factor SR family.

It is found in the nucleus. Its function is as follows. Necessary for the splicing of pre-mRNA. This is Splicing factor U2af large subunit B (U2AF65B) from Oryza sativa subsp. japonica (Rice).